The following is a 27-amino-acid chain: Natriuretic peptides A (27 aa).

A disulfide bond links Cys7 and Cys23.

The protein belongs to the natriuretic peptide family.

It is found in the secreted. Its function is as follows. Hormone playing a key role in cardiovascular homeostasis through regulation of natriuresis, diuresis, and vasodilation. Has a cGMP-stimulating activity. This Anguilla japonica (Japanese eel) protein is Natriuretic peptides A (nppa).